The primary structure comprises 487 residues: (S)-N-methylcoclaurine 3'-hydroxylase isozyme 1 (487 aa).

The chain crosses the membrane as a helical span at residues 4 to 24 (TVALIAVIISSILYLLFGGSG). C429 contributes to the heme binding site.

This sequence belongs to the cytochrome P450 family. The cofactor is heme.

The protein localises to the endoplasmic reticulum membrane. The protein resides in the microsome membrane. The enzyme catalyses (S)-N-methylcoclaurine + reduced [NADPH--hemoprotein reductase] + O2 = (S)-3'-hydroxy-N-methylcoclaurine + oxidized [NADPH--hemoprotein reductase] + H2O + H(+). It participates in alkaloid biosynthesis; (S)-reticuline biosynthesis; (S)-reticuline from (S)-norcoclaurine: step 3/4. 3'-hydroxylation of (S)-N-methylcoclaurine. The protein is (S)-N-methylcoclaurine 3'-hydroxylase isozyme 1 (CYP80B1) of Eschscholzia californica (California poppy).